Here is a 305-residue protein sequence, read N- to C-terminus: UDP-3-O-acyl-N-acetylglucosamine deacetylase (305 aa).

3 residues coordinate Zn(2+): His-79, His-238, and Asp-242. Catalysis depends on His-265, which acts as the Proton donor.

It belongs to the LpxC family. It depends on Zn(2+) as a cofactor.

It catalyses the reaction a UDP-3-O-[(3R)-3-hydroxyacyl]-N-acetyl-alpha-D-glucosamine + H2O = a UDP-3-O-[(3R)-3-hydroxyacyl]-alpha-D-glucosamine + acetate. It participates in glycolipid biosynthesis; lipid IV(A) biosynthesis; lipid IV(A) from (3R)-3-hydroxytetradecanoyl-[acyl-carrier-protein] and UDP-N-acetyl-alpha-D-glucosamine: step 2/6. Functionally, catalyzes the hydrolysis of UDP-3-O-myristoyl-N-acetylglucosamine to form UDP-3-O-myristoylglucosamine and acetate, the committed step in lipid A biosynthesis. This chain is UDP-3-O-acyl-N-acetylglucosamine deacetylase, found in Vibrio campbellii (strain ATCC BAA-1116).